Reading from the N-terminus, the 347-residue chain is 5-deoxyribose 1-phosphate isomerase (347 aa).

Substrate contacts are provided by residues 48–50, arginine 91, and glutamine 198; that span reads RGA. Residue aspartate 239 is the Proton donor of the active site. Substrate is bound at residue 249 to 250; the sequence is NK.

It belongs to the EIF-2B alpha/beta/delta subunits family. DrdI subfamily.

It carries out the reaction 5-deoxy-alpha-D-ribose 1-phosphate = 5-deoxy-D-ribulose 1-phosphate. The protein operates within carbohydrate degradation. Functionally, catalyzes the isomerization of 5-deoxy-alpha-D-ribose 1-phosphate to 5-deoxy-D-ribulose 1-phosphate, as part of a 5-deoxyribose salvage pathway that recycles this toxic radical SAM enzyme by-product to mainstream metabolites. The protein is 5-deoxyribose 1-phosphate isomerase of Petrotoga mobilis (strain DSM 10674 / SJ95).